Reading from the N-terminus, the 351-residue chain is S-adenosylmethionine:tRNA ribosyltransferase-isomerase (351 aa).

The protein belongs to the QueA family. In terms of assembly, monomer.

The protein resides in the cytoplasm. It carries out the reaction 7-aminomethyl-7-carbaguanosine(34) in tRNA + S-adenosyl-L-methionine = epoxyqueuosine(34) in tRNA + adenine + L-methionine + 2 H(+). Its pathway is tRNA modification; tRNA-queuosine biosynthesis. Functionally, transfers and isomerizes the ribose moiety from AdoMet to the 7-aminomethyl group of 7-deazaguanine (preQ1-tRNA) to give epoxyqueuosine (oQ-tRNA). The sequence is that of S-adenosylmethionine:tRNA ribosyltransferase-isomerase from Acinetobacter baumannii (strain SDF).